Consider the following 379-residue polypeptide: Glutamate 5-kinase (379 aa).

Position 19 (Lys19) interacts with ATP. Substrate is bound by residues Ser59, Asp146, and Asn158. Residues 178–179 (TD) and 220–226 (TGGMATK) contribute to the ATP site. In terms of domain architecture, PUA spans 285 to 363 (SGDIIIDDGA…KDIISILGHD (79 aa)).

Belongs to the glutamate 5-kinase family.

The protein resides in the cytoplasm. The catalysed reaction is L-glutamate + ATP = L-glutamyl 5-phosphate + ADP. It functions in the pathway amino-acid biosynthesis; L-proline biosynthesis; L-glutamate 5-semialdehyde from L-glutamate: step 1/2. In terms of biological role, catalyzes the transfer of a phosphate group to glutamate to form L-glutamate 5-phosphate. In Vibrio parahaemolyticus serotype O3:K6 (strain RIMD 2210633), this protein is Glutamate 5-kinase.